Reading from the N-terminus, the 147-residue chain is Mid1-interacting protein 1-B (147 aa).

It belongs to the SPOT14 family.

Its subcellular location is the nucleus. It localises to the cytoplasm. The protein localises to the cytoskeleton. Involved in stabilization of microtubules. May play a role in the regulation of lipogenesis. The sequence is that of Mid1-interacting protein 1-B from Danio rerio (Zebrafish).